A 421-amino-acid polypeptide reads, in one-letter code: Phosphatidate cytidylyltransferase 1 (421 aa).

Residue Met-1 is modified to N-acetylmethionine. The span at 1 to 12 shows a compositional bias: polar residues; it reads MEEENVTSSPST. The disordered stretch occupies residues 1–26; sequence MEEENVTSSPSTPVHRLRHRRRSNEV. The next 8 membrane-spanning stretches (helical) occupy residues 60–80, 102–122, 149–169, 183–203, 206–226, 246–266, 321–341, and 369–389; these read IGGF…MVVV, LPYI…FVYG, YHMA…ILTL, WTHM…ANIF, IFWF…AYIF, GFIG…NILG, LCLG…ASGF, and VMAV…SVSV.

Belongs to the CDS family. Requires Mg(2+) as cofactor.

It localises to the membrane. The enzyme catalyses a 1,2-diacyl-sn-glycero-3-phosphate + CTP + H(+) = a CDP-1,2-diacyl-sn-glycerol + diphosphate. The protein operates within phospholipid metabolism; CDP-diacylglycerol biosynthesis; CDP-diacylglycerol from sn-glycerol 3-phosphate: step 3/3. May be involved in the synthesis of minor phospholipids and in modulation of IP3-mediated signal transduction. The chain is Phosphatidate cytidylyltransferase 1 from Arabidopsis thaliana (Mouse-ear cress).